A 396-amino-acid chain; its full sequence is Elongation factor Tu (396 aa).

Residues 10–205 (KPHVNIGTIG…ACDDNIPDPV (196 aa)) enclose the tr-type G domain. The G1 stretch occupies residues 19–26 (GHVDHGKT). 19–26 (GHVDHGKT) is a GTP binding site. Thr26 lines the Mg(2+) pocket. A G2 region spans residues 62–66 (GITIN). The G3 stretch occupies residues 83–86 (DAPG). GTP contacts are provided by residues 83–87 (DAPGH) and 138–141 (NKCD). Residues 138 to 141 (NKCD) form a G4 region. Residues 175-177 (SAL) form a G5 region.

Belongs to the TRAFAC class translation factor GTPase superfamily. Classic translation factor GTPase family. EF-Tu/EF-1A subfamily. Monomer.

The protein resides in the cytoplasm. It catalyses the reaction GTP + H2O = GDP + phosphate + H(+). Functionally, GTP hydrolase that promotes the GTP-dependent binding of aminoacyl-tRNA to the A-site of ribosomes during protein biosynthesis. The polypeptide is Elongation factor Tu (Corynebacterium glutamicum (strain ATCC 13032 / DSM 20300 / JCM 1318 / BCRC 11384 / CCUG 27702 / LMG 3730 / NBRC 12168 / NCIMB 10025 / NRRL B-2784 / 534)).